A 321-amino-acid polypeptide reads, in one-letter code: Beta-ketoacyl-[acyl-carrier-protein] synthase III (321 aa).

Residues C114 and H248 contribute to the active site. The tract at residues 249–253 (QANKR) is ACP-binding. N278 is an active-site residue.

This sequence belongs to the thiolase-like superfamily. FabH family. In terms of assembly, homodimer.

Its subcellular location is the cytoplasm. The enzyme catalyses malonyl-[ACP] + acetyl-CoA + H(+) = 3-oxobutanoyl-[ACP] + CO2 + CoA. It participates in lipid metabolism; fatty acid biosynthesis. In terms of biological role, catalyzes the condensation reaction of fatty acid synthesis by the addition to an acyl acceptor of two carbons from malonyl-ACP. Catalyzes the first condensation reaction which initiates fatty acid synthesis and may therefore play a role in governing the total rate of fatty acid production. Possesses both acetoacetyl-ACP synthase and acetyl transacylase activities. Its substrate specificity determines the biosynthesis of branched-chain and/or straight-chain of fatty acids. This is Beta-ketoacyl-[acyl-carrier-protein] synthase III from Sphingopyxis alaskensis (strain DSM 13593 / LMG 18877 / RB2256) (Sphingomonas alaskensis).